The following is a 159-amino-acid chain: Putative transmembrane protein ORF159 (159 aa).

2 consecutive transmembrane segments (helical) span residues 20 to 40 and 59 to 79; these read LLLS…LSLF and IIAV…GFCC. The Cell attachment site motif lies at 106 to 108; that stretch reads RGD.

The protein resides in the host membrane. The sequence is that of Putative transmembrane protein ORF159 from Acidianus sp. F28 (AFV-2).